A 6298-amino-acid polypeptide reads, in one-letter code: Adhesion G-protein coupled receptor V1 (6298 aa).

Positions 1–28 (MSVTSEPGMISSFLLVYLSTLFISFVFG) are cleaved as a signal peptide. 22 Calx-beta domains span residues 29–116 (EAEI…FHLT), 132–236 (ASVT…IQLR), 251–362 (VEII…IMLL), 389–489 (YGVL…LTIL), 646–746 (PAIA…TLSL), 764–862 (DLII…VILS), 877–980 (VNIT…IILL), 994–1094 (ASLR…IVLF), 1108–1208 (ATVI…LRLV), 1440–1540 (AMPR…FLLK), 1562–1662 (QKSD…VTLV), 1706–1805 (TGLP…VELL), 1846–1948 (ILVT…VSIL), 1962–2075 (TLTI…IELF), 2103–2202 (HLVI…VQLL), 2218–2320 (VITI…VQLA), 2437–2537 (TLCL…FLIS), 2576–2672 (FIIY…VRLG), 2687–2786 (VTVN…VVLY), 2810–2921 (LTVE…VNLT), 2945–3044 (QIVI…LLLT), and 3067–3167 (DGPG…VCTL). Residues 29–5901 (EAEIRFTGQT…TDNSSSYNEA (5873 aa)) lie on the Extracellular side of the membrane. EAR repeat units lie at residues 3251–3292 (VFSI…RWQG), 3293–3341 (TFVP…MLTA), 3344–3389 (RLVL…RWNG), 3391–3435 (NFAW…TWSG), 3437–3484 (QFIN…VWEM), and 3488–3530 (SLRY…CWNS). Calx-beta domains are found at residues 3581–3622 (QSDF…RVQL), 3636–3736 (SVRV…VVTL), 3772–3872 (GAVR…VTIA), 3919–4003 (GGVI…ISLV), 4017–4120 (VNVV…IELT), 4135–4235 (SVII…EFQL), 4251–4351 (ARIT…LAIT), 4384–4484 (RIII…ILLI), 4507–4607 (SPFG…IVQL), 4628–4728 (KFGD…AVQL), 4989–5089 (TTAE…INLT), 5281–5325 (AVEE…YVFL), and 5361–5461 (IGFS…FVEL). Residues 5740-5896 (SILALHWNPQ…AVYAQTDNSS (157 aa)) enclose the GAIN-B domain. 2 disulfide bridges follow: cysteine 5849-cysteine 5878 and cysteine 5866-cysteine 5880. A GPS region spans residues 5849 to 5896 (CLLWNQAAASWLSDSQFCKVVEDASDYVECACSHMSVYAVYAQTDNSS). The helical transmembrane segment at 5902–5922 (FFSAGLICISGLCLAVVSHMF) threads the bilayer. At 5923 to 5932 (CARHSMFAAK) the chain is on the cytoplasmic side. Residues 5933 to 5953 (LLTHMMVASLGTQILFLASAY) form a helical membrane-spanning segment. The Extracellular portion of the chain corresponds to 5954-5973 (ASPHLSEESCSAVAAVAHYL). The helical transmembrane segment at 5974 to 5994 (YLCQFSWMLIQSVNFWYVLVV) threads the bilayer. At 5995-6003 (SDEHTERRC) the chain is on the cytoplasmic side. A helical transmembrane segment spans residues 6004 to 6024 (LLFCLLSWGLPSFVVILLILI). The Extracellular segment spans residues 6025–6052 (LRGIYHRSMPQIYGLIHGDLCFIPNIYA). Residues 6053–6073 (ALFTAALVPLMCLVVVFVVFI) traverse the membrane as a helical segment. The Cytoplasmic portion of the chain corresponds to 6074–6097 (HAYQLKPQWKGYDDVFRGRTNAAE). A helical transmembrane segment spans residues 6098–6118 (IPLILYLFALISMTWLWGGLH). Residues 6119–6126 (MAYGHFWM) lie on the Extracellular side of the membrane. A helical membrane pass occupies residues 6127–6147 (LVLFVIFNSLQGLYVFVVYFI). Residues 6148 to 6298 (LHNQTCCPMK…RRIPIADTHL (151 aa)) are Cytoplasmic-facing. Disordered regions lie at residues 6206–6242 (ERSSFQQTSQASPDLKTSPQNGASFPSSGGYGPGSLI) and 6264–6283 (SVSDNESGQGSQEGGTLTDS). 2 stretches are compositionally biased toward polar residues: residues 6208–6226 (SSFQQTSQASPDLKTSPQN) and 6265–6283 (VSDNESGQGSQEGGTLTDS).

This sequence belongs to the G-protein coupled receptor 2 family. Adhesion G-protein coupled receptor (ADGR) subfamily. As to quaternary structure, forms a heterodimer, consisting of a large extracellular region (alpha subunit) non-covalently linked to a seven-transmembrane moiety (beta subunit). Interacts (via the cytoplasmic region) with PDZD7. Component of USH2 complex, composed of ADGRV1, PDZD7, USH2A and WHRN. Interacts with USH2A and WHRN. Interacts (via the cytoplasmic region) with MYO7A (via MyTH4-FERM domains). Autoproteolytically cleaved into 2 subunits, an extracellular alpha subunit and a seven-transmembrane subunit. As to expression, expressed by oligodendrocytes. In midbrain, enriched in the myelinated regions of the superior and inferior colliculi. In the cochlea, expressed in developing hair cells. Expressed by photoreceptors in the retina.

It localises to the cell membrane. The protein resides in the cell projection. Its subcellular location is the stereocilium membrane. The protein localises to the photoreceptor inner segment. It is found in the secreted. Functionally, G-protein coupled receptor which has an essential role in the development of hearing and vision. Couples to G-alpha(i)-proteins, GNAI1/2/3, G-alpha(q)-proteins, GNAQ, as well as G-alpha(s)-proteins, GNAS, inhibiting adenylate cyclase (AC) activity and cAMP production. Required for the hair bundle ankle formation, which connects growing stereocilia in developing cochlear hair cells of the inner ear. In response to extracellular calcium, activates kinases PKA and PKC to regulate myelination by inhibiting the ubiquitination of MAG, thus enhancing the stability of this protein in myelin-forming cells of the auditory pathway. In retina photoreceptors, the USH2 complex is required for the maintenance of periciliary membrane complex that seems to play a role in regulating intracellular protein transport. Involved in the regulation of bone metabolism. In terms of biological role, cleaved ADGRV1 beta-subunit couples with G-alpha(i)-proteins, GNAI1/2/3, and constitutively inhibits adenylate cyclase (AC) activity with a stronger effect than full ADGRV1. The chain is Adhesion G-protein coupled receptor V1 from Mus musculus (Mouse).